A 204-amino-acid chain; its full sequence is NADH-quinone oxidoreductase subunit C (204 aa).

The protein belongs to the complex I 30 kDa subunit family. NDH-1 is composed of 14 different subunits. Subunits NuoB, C, D, E, F, and G constitute the peripheral sector of the complex.

The protein localises to the cell inner membrane. The enzyme catalyses a quinone + NADH + 5 H(+)(in) = a quinol + NAD(+) + 4 H(+)(out). NDH-1 shuttles electrons from NADH, via FMN and iron-sulfur (Fe-S) centers, to quinones in the respiratory chain. The immediate electron acceptor for the enzyme in this species is believed to be ubiquinone. Couples the redox reaction to proton translocation (for every two electrons transferred, four hydrogen ions are translocated across the cytoplasmic membrane), and thus conserves the redox energy in a proton gradient. The polypeptide is NADH-quinone oxidoreductase subunit C (Rhodopseudomonas palustris (strain ATCC BAA-98 / CGA009)).